A 637-amino-acid polypeptide reads, in one-letter code: Galactofuranosyltransferase GlfT2 (637 aa).

Residues Arg171, Gln200, Asn229, and Asp256 each contribute to the UDP-alpha-D-galactofuranose site. Mn(2+) is bound by residues Asp256 and Asp258. Asp372 (proton acceptor) is an active-site residue. His396 contacts Mn(2+).

The protein belongs to the glycosyltransferase 2 family. In terms of assembly, homotetramer. Mn(2+) serves as cofactor. It depends on Mg(2+) as a cofactor.

The protein resides in the cell membrane. The catalysed reaction is beta-D-galactofuranosyl-(1-&gt;5)-beta-D-galactofuranosyl-(1-&gt;4)-alpha-L-rhamnosyl-(1-&gt;3)-N-acetyl-alpha-D-glucosaminyl-diphospho-trans,octa-cis-decaprenol + 28 UDP-alpha-D-galactofuranose = [beta-D-galactofuranosyl-(1-&gt;5)-beta-D-galactofuranosyl-(1-&gt;6)]14-beta-D-galactofuranosyl-(1-&gt;5)-beta-D-galactofuranosyl-(1-&gt;4)-alpha-L-rhamnopyranosyl-(1-&gt;3)-N-acetyl-alpha-D-glucosaminyl-diphospho-trans,octa-cis-decaprenol + 28 UDP + 28 H(+). The protein operates within cell wall biogenesis; cell wall polysaccharide biosynthesis. Functionally, involved in the galactan polymerization of the arabinogalactan (AG) region of the mycolylarabinogalactan-peptidoglycan (mAGP) complex, an essential component of the mycobacteria cell wall. Thus, successively transfers approximately 28 galactofuranosyl (Galf) residues from UDP-galactofuranose (UDP-Galf) onto the galactofuranosyl-galactofuranosyl-rhamnosyl-GlcNAc-diphospho-decaprenol (Galf-Galf-Rha-GlcNAc-PP-C50) acceptor produced by GlfT1, with alternating 1-&gt;5 and 1-&gt;6 links, forming a galactan domain with approximately 30 galactofuranosyl residues. The sequence is that of Galactofuranosyltransferase GlfT2 from Mycobacterium tuberculosis (strain ATCC 25618 / H37Rv).